We begin with the raw amino-acid sequence, 380 residues long: GATOR1 complex protein NPRL2 (380 aa).

An interaction with PDPK1 region spans residues 1–133 (MGSSCRIECI…SKQKLVPIMT (133 aa)). Arg-78 contributes to the GDP binding site. Arg-78 is subject to Asymmetric dimethylarginine. Residues Lys-158 and Lys-357 each participate in a glycyl lysine isopeptide (Lys-Gly) (interchain with G-Cter in ubiquitin) cross-link.

It belongs to the NPR2 family. Within the GATOR complex, component of the GATOR1 subcomplex, made of DEPDC5, NPRL2 and NPRL3. GATOR1 mediates the strong interaction of the GATOR complex with small GTPases Rag (RagA/RRAGA, RagB/RRAGB, RagC/RRAGC and/or RagD/RRAGD) heterodimers. GATOR1 interacts with GPR155/LYCHOS; interaction takes place in presence of cholesterol and prevents interaction between GATOR1 and KICSTOR. Interacts with PDPK1. In terms of processing, in the presence of abundant amino acids, ubiquitinated at Lys-158 and Lys-357 via 'Lys-6'-linked ubiquitination by the WDR24 component of the GATOR2 complex, thereby inhibiting the GATOR1 complex and promoting mTORC1 activation. Asymmetric dimethylation at Arg-78 by PRMT1 inhibits the GTPase activator activity of the GATOR1 complex and consequently inducing timely mTORC1 activation under methionine-sufficient conditions.

The protein localises to the lysosome membrane. Its function is as follows. Catalytic component of the GATOR1 complex, a multiprotein complex that functions as an inhibitor of the amino acid-sensing branch of the mTORC1 pathway. In response to amino acid depletion, the GATOR1 complex has GTPase activating protein (GAP) activity and strongly increases GTP hydrolysis by RagA/RRAGA (or RagB/RRAGB) within heterodimeric Rag complexes, thereby turning them into their inactive GDP-bound form, releasing mTORC1 from lysosomal surface and inhibiting mTORC1 signaling. In the presence of abundant amino acids, the GATOR1 complex is ubiquitinated and inhibited by GATOR2. Within the GATOR1 complex, NPRL2 constitutes the catalytic subunit that mediates the GTPase activator activity and under methionine-sufficient conditions, the GTPase activator activity is inhibited by PRMT1 through methylation and consequently inducing timely mTORC1 activation. Functionally, suppresses Src-dependent tyrosine phosphorylation and activation of PDPK1 and its downstream signaling. Down-regulates PDPK1 kinase activity by interfering with tyrosine phosphorylation at 'Tyr-9', 'Tyr-373' and 'Tyr-376' residues. May act as a tumor suppressor. Suppresses cell growth and enhances sensitivity to various anticancer drugs. The sequence is that of GATOR1 complex protein NPRL2 from Bos taurus (Bovine).